The sequence spans 283 residues: 4-diphosphocytidyl-2-C-methyl-D-erythritol kinase (283 aa).

Lys-10 is a catalytic residue. 99–109 (PMGGGLGGGSS) provides a ligand contact to ATP. Residue Asp-141 is part of the active site.

The protein belongs to the GHMP kinase family. IspE subfamily. In terms of assembly, homodimer.

The catalysed reaction is 4-CDP-2-C-methyl-D-erythritol + ATP = 4-CDP-2-C-methyl-D-erythritol 2-phosphate + ADP + H(+). It participates in isoprenoid biosynthesis; isopentenyl diphosphate biosynthesis via DXP pathway; isopentenyl diphosphate from 1-deoxy-D-xylulose 5-phosphate: step 3/6. In terms of biological role, catalyzes the phosphorylation of the position 2 hydroxy group of 4-diphosphocytidyl-2C-methyl-D-erythritol. The protein is 4-diphosphocytidyl-2-C-methyl-D-erythritol kinase of Salmonella typhi.